Here is a 122-residue protein sequence, read N- to C-terminus: Large ribosomal subunit protein uL14 (122 aa).

Belongs to the universal ribosomal protein uL14 family. As to quaternary structure, part of the 50S ribosomal subunit. Forms a cluster with proteins L3 and L19. In the 70S ribosome, L14 and L19 interact and together make contacts with the 16S rRNA in bridges B5 and B8.

In terms of biological role, binds to 23S rRNA. Forms part of two intersubunit bridges in the 70S ribosome. The polypeptide is Large ribosomal subunit protein uL14 (Leuconostoc mesenteroides subsp. mesenteroides (strain ATCC 8293 / DSM 20343 / BCRC 11652 / CCM 1803 / JCM 6124 / NCDO 523 / NBRC 100496 / NCIMB 8023 / NCTC 12954 / NRRL B-1118 / 37Y)).